We begin with the raw amino-acid sequence, 1073 residues long: MDTRGYSETKKGRYPVGKKSLESPNGYSNYGTSMDNELSSEYASRGMHIGDLENLVNEIEDEWKDLGREDYQPISTALELLDDSSFGRDYKSFLNVYDRISAALQTIAHTHKDDFTRGISAYGEIMEGIQKCNSRIIALKQSLEASQECIGNTNSKELQQTLARSSQYKKVISVLKELNEANQLFDNFHTLVDSKQYYHASDLIRRVWDELSRSDFDGILVVEQFKSRMTGLLSHLEDILSEELVSITFLKDAVAYPIVSYCSPNPLRETSNPYFLRDFLKNNANTSTLGQSEQLRYLEEALSLKLSDCLKMDYGRDSLRDIRIVLESLNLLGKLPNAISSLKSRTSAEMFTTVDSTSRAIVNKYSLGNNVSTVNPFSKSLYDIGLHAETDREHTMISEFLTNLFTKLRCVLMHYRGISEFMTKLETKTPKHASSSHKSSIMSVNSDPTSPKVSKFDTSDSTFPFDTLLQAFESEIRLMLKDYLISKEEYIENSGNFVVGTEMSIYNLPGENEEDKLFDVTNEIAVENKSNAFYARINELVNEKAPELILNKSNASVSTIELFSGSSKEIVRLAGHVVFVGPSVFHASSVLPQTVFFLEDSVSILKNPNIPPQFAVNFMKEFLRGSYIPQLYKFMSSHFDTIMKDVGAFQLHRDWKIYSKIPIFKCHVAIVQYFHDLQDYLPIVALNLVEFYELLHTLLVRFRNHCSDYLSDLCRTAVLKEYKHVNEDTEDVDDTVRVKLLHDDVTYPQFIKFLKQKNPSLEGLNELCRMENKRLLQYEDRAITSEVKLPVSVLSKDSDLVNSVSYLHNSMEWFLQRCFSRFMNGSRRMNVLQQNQANFGGDFLPIDNLLGNNSDLMKGAYKEVFDSLQRLQFDALLLIRMEVRLQYIHSINQSVNLPDYVVEYRGRPDASIMALNSTIVTTNLKLETCLNEWERRFVFQGLSELVDSSLYSIFYKIESMNRGSCLQMLKNMSAMIQILKTVKEIHGDVEFPKSSRVFGIYQNGAKKIIEHFIAAPKKELLPDVKQMVRIYYQRLMKDAKRNGRDDLYRQYQKKIGSVLTQFDNTVGGARKNP.

The span at 1–11 shows a compositional bias: basic and acidic residues; sequence MDTRGYSETKK. The segment at 1 to 33 is disordered; the sequence is MDTRGYSETKKGRYPVGKKSLESPNGYSNYGTS. Residues 22-33 are compositionally biased toward polar residues; sequence ESPNGYSNYGTS. T449 bears the Phosphothreonine mark. Residue S450 is modified to Phosphoserine.

As to quaternary structure, component of the exocyst complex composed of sec3, sec5, sec6, sec8, sec10, sec15 and exo70.

It localises to the cytoplasm. Its subcellular location is the cell tip. It is found in the cytoskeleton. The protein resides in the cytoplasmic vesicle. Component of the exocyst complex involved in the delivery of secretory vesicles to the plasma membrane. Also required for polarized cell growth and division septum assembly. The exocyst complex plays an important role in the targeting of rho3, as well as the two main hydrolases required for cell separation, eng1 and agn1, to the cell wall surrounding the septum before cell separation begins. This is Exocyst complex component sec8 (sec8) from Schizosaccharomyces pombe (strain 972 / ATCC 24843) (Fission yeast).